The chain runs to 1256 residues: Pullulanase A (1256 aa).

The N-terminal stretch at M1 to S44 is a signal peptide. Positions I42–P117 are disordered. The span at T48 to T61 shows a compositional bias: low complexity. Positions D79 to L90 are enriched in polar residues. A compositionally biased stretch (low complexity) spans T99 to E111. Substrate is bound by residues W141–W143, W153, D199, W248–W250, W261, K303, and N308. The Ca(2+) site is built by S646 and Y648. Residues Y652–D653 and F728 contribute to the substrate site. The Nucleophile role is filled by D763. E792 acts as the Proton donor in catalysis. W794 lines the substrate pocket. Ca(2+) is bound by residues M813, T816, and D817. Substrate-binding residues include D824, R827, and Y834. Ca(2+) contacts are provided by D867 and D871. Residues N881, K954, and D974–Y976 each bind substrate. Ca(2+) is bound at residue D977. Residues S1126 to N1224 form a disordered region. The span at S1134–N1172 shows a compositional bias: basic and acidic residues. Over residues S1181–S1194 the composition is skewed to low complexity. The span at Q1200–K1210 shows a compositional bias: polar residues. Positions L1222–G1226 match the LPXTG sorting signal motif. Pentaglycyl murein peptidoglycan amidated threonine is present on T1225. Residues G1226–N1256 constitute a propeptide, removed by sortase.

The protein belongs to the glycosyl hydrolase 13 family.

The protein resides in the secreted. It localises to the cell wall. It is found in the cell surface. It catalyses the reaction Hydrolysis of (1-&gt;6)-alpha-D-glucosidic linkages in pullulan, amylopectin and glycogen, and in the alpha- and beta-limit dextrins of amylopectin and glycogen.. Inhibited by 4-O-alpha-D-glucopyranosylmoranoline (G1M). Virulence factor. Involved in the degradation of glycogen of the mammalian host cells. Hydrolyzes the alpha-1,6-branchpoints of glycogen. Hydrolyzes pullulan. Does not hydrolyze dextran. Binds to mouse lung alveolar type II cells that are rich in glycogen stores. Is an alpha-glucan-specific carbohydrate-binding protein, which binds to amylose (pure alpha-(1,4)-linked glucose), amylopectin (alpha-(1,4)-linked glucose with alpha-(1,6) branch points), pullulan (linear polymer of mixed alpha-(1,4)- and alpha-(1,6)-linked glucose) and glycogen (similar to amylopectin with more frequent alpha-(1,6) branch points) in vitro. Does not bind to dextran (a linear polymer of alpha-(1,6)-linked glucose). This chain is Pullulanase A, found in Streptococcus pneumoniae serotype 2 (strain D39 / NCTC 7466).